The primary structure comprises 97 residues: UPF0235 protein Ppha_2415 (97 aa).

It belongs to the UPF0235 family.

This Pelodictyon phaeoclathratiforme (strain DSM 5477 / BU-1) protein is UPF0235 protein Ppha_2415.